An 82-amino-acid chain; its full sequence is RNA-binding protein Hfq (82 aa).

Residues 9-68 enclose the Sm domain; sequence DPFLNTLRKEHVPVSIYLVNGIKLQGKVDSFDQYVIMLKNTVSQMVYKHAISTIVPGRPV.

Belongs to the Hfq family. Homohexamer.

Its function is as follows. RNA chaperone that binds small regulatory RNA (sRNAs) and mRNAs to facilitate mRNA translational regulation in response to envelope stress, environmental stress and changes in metabolite concentrations. Also binds with high specificity to tRNAs. This chain is RNA-binding protein Hfq, found in Methylococcus capsulatus (strain ATCC 33009 / NCIMB 11132 / Bath).